Consider the following 56-residue polypeptide: MAVPKKRTSISKKRIRKNIWKRKADWASVKAFSLAKSLSTGNSKSFFVRQINKTKK.

The protein belongs to the bacterial ribosomal protein bL32 family.

Its subcellular location is the plastid. It localises to the chloroplast. The chain is Large ribosomal subunit protein bL32c from Platanus occidentalis (Sycamore).